The following is a 187-amino-acid chain: Probable DNA-directed RNA polymerase subunit delta (187 aa).

The HTH HARE-type domain maps to 14–81 (LSMIEVAHAL…GNNVWALRSW (68 aa)). Residues 96–187 (EIEDEEEEKP…EDDSDDTDED (92 aa)) are disordered. 2 stretches are compositionally biased toward acidic residues: residues 117-149 (IEDEIDPEDEEGTKETTEEDMSYDTQAEDEDKD) and 157-187 (ELAEVELDNVDEEVDIELEDDEDDSDDTDED).

The protein belongs to the RpoE family. As to quaternary structure, RNAP is composed of a core of 2 alpha, a beta and a beta' subunits. The core is associated with a delta subunit and one of several sigma factors.

In terms of biological role, participates in both the initiation and recycling phases of transcription. In the presence of the delta subunit, RNAP displays an increased specificity of transcription, a decreased affinity for nucleic acids, and an increased efficiency of RNA synthesis because of enhanced recycling. The polypeptide is Probable DNA-directed RNA polymerase subunit delta (Lactococcus lactis subsp. cremoris (strain SK11)).